Here is a 509-residue protein sequence, read N- to C-terminus: Lanosterol 14-alpha demethylase (509 aa).

A helical transmembrane segment spans residues 30–50 (GNLLSMLLIACAFTLSLVYLI). Position 455 (C455) interacts with heme.

It belongs to the cytochrome P450 family. It depends on heme as a cofactor. Post-translationally, ubiquitinated by MARCHF6, leading to proteasomal degradation. As to expression, ubiquitously expressed with highest levels in testis, ovary, adrenal, prostate, liver, kidney and lung.

The protein resides in the endoplasmic reticulum membrane. Its subcellular location is the microsome membrane. It catalyses the reaction a 14alpha-methyl steroid + 3 reduced [NADPH--hemoprotein reductase] + 3 O2 = a Delta(14) steroid + formate + 3 oxidized [NADPH--hemoprotein reductase] + 4 H2O + 4 H(+). It carries out the reaction lanosterol + 3 reduced [NADPH--hemoprotein reductase] + 3 O2 = 4,4-dimethyl-5alpha-cholesta-8,14,24-trien-3beta-ol + formate + 3 oxidized [NADPH--hemoprotein reductase] + 4 H2O + 4 H(+). The enzyme catalyses 24,25-dihydrolanosterol + 3 reduced [NADPH--hemoprotein reductase] + 3 O2 = 4,4-dimethyl-8,14-cholestadien-3beta-ol + formate + 3 oxidized [NADPH--hemoprotein reductase] + 4 H2O + 4 H(+). The catalysed reaction is a 14alpha-methyl steroid + reduced [NADPH--hemoprotein reductase] + O2 = a 14alpha-hydroxymethyl steroid + oxidized [NADPH--hemoprotein reductase] + H2O + H(+). It catalyses the reaction a 14alpha-hydroxymethyl steroid + reduced [NADPH--hemoprotein reductase] + O2 = a 14alpha-formyl steroid + oxidized [NADPH--hemoprotein reductase] + 2 H2O + H(+). It carries out the reaction a 14alpha-formyl steroid + reduced [NADPH--hemoprotein reductase] + O2 = a Delta(14) steroid + formate + oxidized [NADPH--hemoprotein reductase] + H2O + 2 H(+). The enzyme catalyses lanosterol + reduced [NADPH--hemoprotein reductase] + O2 = 32-hydroxylanosterol + oxidized [NADPH--hemoprotein reductase] + H2O + H(+). The catalysed reaction is 32-hydroxylanosterol + reduced [NADPH--hemoprotein reductase] + O2 = 32-oxolanosterol + oxidized [NADPH--hemoprotein reductase] + 2 H2O + H(+). It catalyses the reaction 32-oxolanosterol + reduced [NADPH--hemoprotein reductase] + O2 = 4,4-dimethyl-5alpha-cholesta-8,14,24-trien-3beta-ol + formate + oxidized [NADPH--hemoprotein reductase] + H2O + 2 H(+). It carries out the reaction 24,25-dihydrolanosterol + reduced [NADPH--hemoprotein reductase] + O2 = 32-hydroxy-24,25-dihydrolanosterol + oxidized [NADPH--hemoprotein reductase] + H2O + H(+). The enzyme catalyses 32-hydroxy-24,25-dihydrolanosterol + reduced [NADPH--hemoprotein reductase] + O2 = 32-oxo-24,25-dihydrolanosterol + oxidized [NADPH--hemoprotein reductase] + 2 H2O + H(+). The catalysed reaction is 32-oxo-24,25-dihydrolanosterol + reduced [NADPH--hemoprotein reductase] + O2 = 4,4-dimethyl-8,14-cholestadien-3beta-ol + formate + oxidized [NADPH--hemoprotein reductase] + H2O + 2 H(+). It functions in the pathway steroid biosynthesis; zymosterol biosynthesis; zymosterol from lanosterol: step 1/6. With respect to regulation, inhibited by azalanstat. Inhibited by azole antifungal agents ketoconazole, itraconazole and fluconazole. Sterol 14alpha-demethylase that plays a critical role in the cholesterol biosynthesis pathway, being cholesterol the major sterol component in mammalian membranes as well as a precursor for bile acid and steroid hormone synthesis. Cytochrome P450 monooxygenase that catalyzes the three-step oxidative removal of the 14alpha-methyl group (C-32) of sterols such as lanosterol (lanosta-8,24-dien-3beta-ol) and 24,25-dihydrolanosterol (DHL) in the form of formate, and converts the sterols to 4,4-dimethyl-5alpha-cholesta-8,14,24-trien-3beta-ol and 4,4-dimethyl-8,14-cholestadien-3beta-ol, respectively, which are intermediates of cholesterol biosynthesis. Can also demethylate substrates not intrinsic to mammals, such as eburicol (24-methylene-24,25-dihydrolanosterol), but at a lower rate than DHL. This Homo sapiens (Human) protein is Lanosterol 14-alpha demethylase.